Reading from the N-terminus, the 281-residue chain is Pantothenate synthetase (281 aa).

30–37 (MGNLHQGH) serves as a coordination point for ATP. His37 (proton donor) is an active-site residue. Gln61 provides a ligand contact to (R)-pantoate. Residue Gln61 participates in beta-alanine binding. ATP is bound at residue 149–152 (GRKD). Gln155 serves as a coordination point for (R)-pantoate. ATP-binding positions include Ile178 and 186 to 189 (MSSR).

The protein belongs to the pantothenate synthetase family. As to quaternary structure, homodimer.

Its subcellular location is the cytoplasm. The catalysed reaction is (R)-pantoate + beta-alanine + ATP = (R)-pantothenate + AMP + diphosphate + H(+). The protein operates within cofactor biosynthesis; (R)-pantothenate biosynthesis; (R)-pantothenate from (R)-pantoate and beta-alanine: step 1/1. Catalyzes the condensation of pantoate with beta-alanine in an ATP-dependent reaction via a pantoyl-adenylate intermediate. The protein is Pantothenate synthetase of Shewanella denitrificans (strain OS217 / ATCC BAA-1090 / DSM 15013).